The primary structure comprises 239 residues: Venom nerve growth factor (239 aa).

The N-terminal stretch at M1–A18 is a signal peptide. Positions A19–R125 are excised as a propeptide. Positions G47–D66 are enriched in basic and acidic residues. A disordered region spans residues G47–E68. 3 disulfide bridges follow: C139/C203, C181/C231, and C191/C233.

Belongs to the NGF-beta family. Homodimer; non-covalently linked. In terms of tissue distribution, expressed by the venom gland.

The protein resides in the secreted. Its function is as follows. Nerve growth factor is important for the development and maintenance of the sympathetic and sensory nervous systems. It stimulates division and differentiation of sympathetic and embryonic sensory neurons as well as basal forebrain cholinergic neurons in the brain. Its relevance in the snake venom is not clear. However, it has been shown to inhibit metalloproteinase-dependent proteolysis of platelet glycoprotein Ib alpha, suggesting a metalloproteinase inhibition to prevent metalloprotease autodigestion and/or protection against prey proteases. Binds a lipid between the two protein chains in the homodimer. The lipid-bound form promotes histamine relase from mouse mast cells, contrary to the lipid-free form. This Pseudechis porphyriacus (Red-bellied black snake) protein is Venom nerve growth factor.